A 178-amino-acid chain; its full sequence is Bryoporin (178 aa).

5 residues coordinate phosphocholine: serine 51, valine 83, serine 102, proline 104, and tyrosine 134. Residues 101–117 (WSVPFDYNLYSNWWNIA) are trp-rich region.

It belongs to the actinoporin family. Plant subfamily.

With respect to regulation, inhibited by sphingomyelin. In terms of biological role, actinoporin-related protein having hemolytic activity in vitro. Binds probably a phosphocholine derivative with the unique amido or hydroxyl groups found in sphingomyelin. Involved in drought tolerance. The sequence is that of Bryoporin from Physcomitrium patens (Spreading-leaved earth moss).